A 346-amino-acid chain; its full sequence is Protein RecA (346 aa).

64-71 contacts ATP; the sequence is GPESSGKT.

This sequence belongs to the RecA family.

Its subcellular location is the cytoplasm. Can catalyze the hydrolysis of ATP in the presence of single-stranded DNA, the ATP-dependent uptake of single-stranded DNA by duplex DNA, and the ATP-dependent hybridization of homologous single-stranded DNAs. It interacts with LexA causing its activation and leading to its autocatalytic cleavage. This chain is Protein RecA, found in Bacillus pumilus (strain SAFR-032).